A 338-amino-acid polypeptide reads, in one-letter code: Phenylalanine--tRNA ligase alpha subunit (338 aa).

A Mg(2+)-binding site is contributed by glutamate 252.

Belongs to the class-II aminoacyl-tRNA synthetase family. Phe-tRNA synthetase alpha subunit type 1 subfamily. Tetramer of two alpha and two beta subunits. Mg(2+) is required as a cofactor.

The protein resides in the cytoplasm. It carries out the reaction tRNA(Phe) + L-phenylalanine + ATP = L-phenylalanyl-tRNA(Phe) + AMP + diphosphate + H(+). The sequence is that of Phenylalanine--tRNA ligase alpha subunit from Ectopseudomonas mendocina (strain ymp) (Pseudomonas mendocina).